The chain runs to 598 residues: Aspartate--tRNA(Asp/Asn) ligase (598 aa).

Glu177 lines the L-aspartate pocket. The interval 201 to 204 (QLFK) is aspartate. Arg223 is a binding site for L-aspartate. ATP contacts are provided by residues 223–225 (RDE) and Gln232. Residue His456 participates in L-aspartate binding. ATP is bound at residue Glu493. Residue Arg500 participates in L-aspartate binding. 545-548 (GVDR) serves as a coordination point for ATP.

Belongs to the class-II aminoacyl-tRNA synthetase family. Type 1 subfamily. In terms of assembly, homodimer.

The protein localises to the cytoplasm. The enzyme catalyses tRNA(Asx) + L-aspartate + ATP = L-aspartyl-tRNA(Asx) + AMP + diphosphate. In terms of biological role, aspartyl-tRNA synthetase with relaxed tRNA specificity since it is able to aspartylate not only its cognate tRNA(Asp) but also tRNA(Asn). Reaction proceeds in two steps: L-aspartate is first activated by ATP to form Asp-AMP and then transferred to the acceptor end of tRNA(Asp/Asn). This Prochlorococcus marinus subsp. pastoris (strain CCMP1986 / NIES-2087 / MED4) protein is Aspartate--tRNA(Asp/Asn) ligase.